Here is a 101-residue protein sequence, read N- to C-terminus: uncharacterized protein (101 aa).

This is an uncharacterized protein from Shigella flexneri.